The following is a 465-amino-acid chain: ATP-dependent protease ATPase subunit HslU (465 aa).

Residues Val-19, 61-66 (GVGKTE), Asp-277, Glu-343, and Arg-415 each bind ATP.

It belongs to the ClpX chaperone family. HslU subfamily. As to quaternary structure, a double ring-shaped homohexamer of HslV is capped on each side by a ring-shaped HslU homohexamer. The assembly of the HslU/HslV complex is dependent on binding of ATP.

It is found in the cytoplasm. Functionally, ATPase subunit of a proteasome-like degradation complex; this subunit has chaperone activity. The binding of ATP and its subsequent hydrolysis by HslU are essential for unfolding of protein substrates subsequently hydrolyzed by HslV. HslU recognizes the N-terminal part of its protein substrates and unfolds these before they are guided to HslV for hydrolysis. The protein is ATP-dependent protease ATPase subunit HslU of Geobacillus sp. (strain WCH70).